The sequence spans 99 residues: Virion membrane protein OPG135 (99 aa).

An N-terminal signal peptide occupies residues 1–22 (MSCYTAILKSVGGLALFQVANG). Residues 23 to 45 (AIDLCRHFFMYFCEQKLRPNSFW) are Intravirion-facing. A helical transmembrane segment spans residues 46-66 (FVVVRAIASMIMYLVLGIALL). The Virion surface segment spans residues 67–83 (YISEQDDKKNTNNDGSN). The segment covering 73–89 (DKKNTNNDGSNNDKRNE) has biased composition (basic and acidic residues). The interval 73–99 (DKKNTNNDGSNNDKRNESSINSNSSPK) is disordered. N-linked (GlcNAc...) asparagine; by host glycosylation occurs at N88. Residues 90–99 (SSINSNSSPK) are compositionally biased toward polar residues.

It belongs to the oerthopoxvirus OPG135 family.

It localises to the virion membrane. The protein resides in the host cytoplasm. Envelope protein. Required for an early step in virion morphogenesis. The sequence is that of Virion membrane protein OPG135 (OPG135) from Homo sapiens (Human).